Consider the following 226-residue polypeptide: Ribosomal RNA small subunit methyltransferase G (226 aa).

S-adenosyl-L-methionine contacts are provided by residues glycine 83, phenylalanine 88, 136-137, and arginine 152; that span reads IE. The disordered stretch occupies residues 199-226; sequence FSPSQSDPEGSVLKVRGLHGPDGQPHRR.

It belongs to the methyltransferase superfamily. RNA methyltransferase RsmG family.

Its subcellular location is the cytoplasm. The enzyme catalyses guanosine(527) in 16S rRNA + S-adenosyl-L-methionine = N(7)-methylguanosine(527) in 16S rRNA + S-adenosyl-L-homocysteine. Specifically methylates the N7 position of guanine in position 527 of 16S rRNA. The sequence is that of Ribosomal RNA small subunit methyltransferase G from Parvibaculum lavamentivorans (strain DS-1 / DSM 13023 / NCIMB 13966).